The sequence spans 320 residues: Acetyl-coenzyme A carboxylase carboxyl transferase subunit beta (320 aa).

Positions 25 to 294 constitute a CoA carboxyltransferase N-terminal domain; sequence VWTKCDSCGQ…AKDEDELLGE (270 aa). Residues Cys29, Cys32, Cys48, and Cys51 each coordinate Zn(2+). Residues 29–51 form a C4-type zinc finger; that stretch reads CDSCGQVLYRAELERNLEVCPKC. Positions 295 to 310 are enriched in acidic residues; that stretch reads EMIADDIESSDNEPEI. The tract at residues 295 to 320 is disordered; the sequence is EMIADDIESSDNEPEINIETNKKEDV.

Belongs to the AccD/PCCB family. In terms of assembly, acetyl-CoA carboxylase is a heterohexamer composed of biotin carboxyl carrier protein (AccB), biotin carboxylase (AccC) and two subunits each of ACCase subunit alpha (AccA) and ACCase subunit beta (AccD). Zn(2+) serves as cofactor.

It localises to the cytoplasm. The enzyme catalyses N(6)-carboxybiotinyl-L-lysyl-[protein] + acetyl-CoA = N(6)-biotinyl-L-lysyl-[protein] + malonyl-CoA. Its pathway is lipid metabolism; malonyl-CoA biosynthesis; malonyl-CoA from acetyl-CoA: step 1/1. Component of the acetyl coenzyme A carboxylase (ACC) complex. Biotin carboxylase (BC) catalyzes the carboxylation of biotin on its carrier protein (BCCP) and then the CO(2) group is transferred by the transcarboxylase to acetyl-CoA to form malonyl-CoA. This Proteus mirabilis (strain HI4320) protein is Acetyl-coenzyme A carboxylase carboxyl transferase subunit beta.